A 599-amino-acid chain; its full sequence is MVSNCLSLSLHLNLHPHKHNRHSLSSLRSRTKAKLYQHVSFTDSSHKSSYTSCVSTFDIQRKSSKHYELGKHSFSPILPGDNLVLSRSGVIRPRLSAMTGSEINDHGYDESQFDPSLTNDDLKPTTPSQRTFSWLDMSSLWIGLVVGVPTYYLAGSLVDLGMAWWQGIATVVTANLILLVPLVLTAQPGTLYGISFPVLARSSFGIRGAHIPTLLRALVGCGWYGIETWIGGEAIFLLLPGHIKKSALSHTLPWLGTSPLEFSCFIVFWLAQLCIVWRGMDGIRKLEKYSAPILISLTSCLLAWSYLKAGGFGHMLSLSSKLTSAQFWTLFFPSLTANISFWATLALNIPDFSRFAKSQTDQIIGQVGLPVFMGLFTFVGVAVTSSTSIIFGRVISNPIELLGQIGGLATTLLAIVGISLATLTTNIAANVVAPANALVNLNPKFFTFGRGAFLTAVLGIVFQPWRLLKSSESFVYTWLIGYSALLGPIGGIILVDYYLIKKMKLNIGDLYSLSPSGEYYFSKGYNVAAVVALVAGIIPVVPGFLHKISALSKISNGFVVVYDNALFFSFIIAGFVYWIIMSRLGRKQSSLSSSSHPLL.

The next 12 membrane-spanning stretches (helical) occupy residues 140 to 160 (LWIG…LVDL), 164 to 184 (WWQG…PLVL), 218 to 238 (LVGC…IFLL), 257 to 277 (TSPL…CIVW), 293 to 313 (ILIS…GGFG), 327 to 347 (FWTL…TLAL), 363 to 383 (IIGQ…GVAV), 411 to 433 (TLLA…NVVA), 445 to 465 (FFTF…FQPW), 474 to 494 (FVYT…GIIL), 525 to 545 (YNVA…PGFL), and 560 to 580 (VVYD…YWII).

Belongs to the purine-cytosine permease (2.A.39) family. Expressed in roots, leaves, stems, flowers, siliques and seeds.

Its subcellular location is the plastid. The protein localises to the chloroplast envelope. It localises to the chloroplast membrane. Functionally, nucleobase-proton symporter that facilitates the uptake of nucleobases in the cells. Can transport adenine, guanine and uracil. Contributes to uracil import into plastids for plastidic uracil salvage which is essential for plant growth and development. This is Purine-uracil permease NCS1 from Arabidopsis thaliana (Mouse-ear cress).